The chain runs to 405 residues: MMYEKTAEHFEQKYKNLPEGHLLVNLGPSHPATHGILQNVIQIDGERIVEAESVIGYVHRCFEKLGERYTYNQFLVCTDRMNYVSTPLNNIGWILAVEKMMQVEVPDRVTYVRMIISELSRIMDHIICLGILGVDLGAFSGMLHLFHHRENIYQIIEKLTGARLTTTFCRIGGLERDIYPEFEKEVKLVCKGLKPAIEEFNSLLLKNKIFLGRTEGIGGISAENAIAYGFSGPNLRAAGVDWDVRKDKPYMLYDKVDFDVPIGEDGSVLHRSLVRMEEMRQSIRIIEQLVDGIPSGAWHADLPHAYLPEKNKVYNNMEELIYHFKIIMHGVKVPPGEHYMATEAANGELGFYIISEGEKSPWRVHVRRPCFWYYQSFAELVRGGLLADSVATMSSLNVIAGELDC.

This sequence belongs to the complex I 49 kDa subunit family. NDH-1 is composed of 14 different subunits. Subunits NuoB, C, D, E, F, and G constitute the peripheral sector of the complex.

The protein resides in the cell inner membrane. The enzyme catalyses a quinone + NADH + 5 H(+)(in) = a quinol + NAD(+) + 4 H(+)(out). Its function is as follows. NDH-1 shuttles electrons from NADH, via FMN and iron-sulfur (Fe-S) centers, to quinones in the respiratory chain. The immediate electron acceptor for the enzyme in this species is believed to be ubiquinone. Couples the redox reaction to proton translocation (for every two electrons transferred, four hydrogen ions are translocated across the cytoplasmic membrane), and thus conserves the redox energy in a proton gradient. The chain is NADH-quinone oxidoreductase subunit D from Leptospira borgpetersenii serovar Hardjo-bovis (strain L550).